We begin with the raw amino-acid sequence, 428 residues long: tRNA dimethylallyltransferase (428 aa).

Residue G21–S28 coordinates ATP. Position 23–28 (T23–S28) interacts with dimethylallyl diphosphate. 2 interaction with substrate tRNA regions span residues D46 to Q49 and R170 to R174. The core aggregation region stretch occupies residues F199–Y207. Residues P210–E232 form an interaction with isopentenylpyrophosphate transferase region. Interaction with substrate tRNA stretches follow at residues Q256–I258 and R284–K302. The Matrin-type zinc finger occupies Y373–R409. Zn(2+)-binding residues include C375, C378, H397, and H403.

This sequence belongs to the IPP transferase family.

Its subcellular location is the cytoplasm. The protein resides in the mitochondrion. It localises to the nucleus. The enzyme catalyses adenosine(37) in tRNA + dimethylallyl diphosphate = N(6)-dimethylallyladenosine(37) in tRNA + diphosphate. Catalyzes the transfer of a dimethylallyl group onto the adenine at position 37 in the anticodon loop on a specific subset of tRNAs both in the cytosol and the mitochondrion, leading to the formation of N6-(dimethylallyl)adenosine (i(6)A). This modification optimizes the codon:anticodon fit in the ribosome and promotes translational fidelity. Competes with the farnesyl pyrophosphate synthase ERG20 for the common substrate dimethylallyl diphosphate (DMAPP). The protein is tRNA dimethylallyltransferase (MOD5) of Saccharomyces cerevisiae (strain ATCC 204508 / S288c) (Baker's yeast).